Here is a 207-residue protein sequence, read N- to C-terminus: Cytochrome bo(3) ubiquinol oxidase subunit 3 (207 aa).

Topologically, residues Met-1–Gln-26 are cytoplasmic. The chain crosses the membrane as a helical span at residues Met-27–Phe-47. The Periplasmic segment spans residues Ala-48 to Asp-70. The helical transmembrane segment at Phe-71–Leu-91 threads the bilayer. The Cytoplasmic portion of the chain corresponds to Lys-92–Ala-99. A helical transmembrane segment spans residues Gly-100–Ile-120. Topologically, residues Tyr-121 to Gly-141 are periplasmic. The chain crosses the membrane as a helical span at residues Phe-142–Ile-162. At Met-163 to Leu-185 the chain is on the cytoplasmic side. Residues Phe-186–Val-206 form a helical membrane-spanning segment. Residue Leu-207 is a topological domain, periplasmic.

It belongs to the cytochrome c oxidase subunit 3 family. As to quaternary structure, heterooctamer of two A chains, two B chains, two C chains and two D chains.

The protein resides in the cell inner membrane. Cytochrome bo(3) ubiquinol terminal oxidase is the component of the aerobic respiratory chain of E.coli that predominates when cells are grown at high aeration. Has proton pump activity across the membrane in addition to electron transfer, pumping 2 protons/electron. In Pseudomonas putida (Arthrobacter siderocapsulatus), this protein is Cytochrome bo(3) ubiquinol oxidase subunit 3 (cyoC).